We begin with the raw amino-acid sequence, 502 residues long: Glutamate--tRNA ligase (502 aa).

A 'HIGH' region motif is present at residues 12-22; sequence PSPTGYLHVGG. Residues 259-263 carry the 'KMSKS' region motif; that stretch reads KLSKR. Lys-262 serves as a coordination point for ATP.

The protein belongs to the class-I aminoacyl-tRNA synthetase family. Glutamate--tRNA ligase type 1 subfamily. Monomer.

The protein localises to the cytoplasm. It carries out the reaction tRNA(Glu) + L-glutamate + ATP = L-glutamyl-tRNA(Glu) + AMP + diphosphate. In terms of biological role, catalyzes the attachment of glutamate to tRNA(Glu) in a two-step reaction: glutamate is first activated by ATP to form Glu-AMP and then transferred to the acceptor end of tRNA(Glu). This Chlorobium chlorochromatii (strain CaD3) protein is Glutamate--tRNA ligase.